Reading from the N-terminus, the 389-residue chain is Leucine aminopeptidase 1 (389 aa).

Residues 1-19 (MKLPALLTLGVAASTMVLA) form the signal peptide. Residues 20–88 (AIAPDQVPLN…LPKVFPTPAV (69 aa)) constitute a propeptide that is removed on maturation. N-linked (GlcNAc...) asparagine glycans are attached at residues Asn96, Asn119, Asn149, Asn164, and Asn181. His189 and Asp208 together coordinate Zn(2+). An N-linked (GlcNAc...) asparagine glycan is attached at Asn233. Zn(2+) is bound by residues Glu247 and Asp274. An intrachain disulfide couples Cys323 to Cys327. Position 356 (His356) interacts with Zn(2+).

It belongs to the peptidase M28 family. M28E subfamily. As to quaternary structure, monomer. Requires Zn(2+) as cofactor.

Its subcellular location is the secreted. In terms of biological role, extracellular aminopeptidase that allows assimilation of proteinaceous substrates. The sequence is that of Leucine aminopeptidase 1 (LAP1) from Paracoccidioides brasiliensis (strain Pb18).